A 234-amino-acid polypeptide reads, in one-letter code: GTP:AMP phosphotransferase, mitochondrial (234 aa).

Residue 24 to 29 (GSGKGT) participates in GTP binding. Residues 45–74 (SSGDILRQEIKSESTLGREATTYIAQGKLL) are NMP. AMP is bound by residues Ser46, Arg51, 72–74 (KLL), 103–106 (GFPR), and Gln110. Residues 144 to 181 (NRYVHVPSGRVYNLQYNPPKVPGLDDITGEPLTKRLDD) form an LID region. GTP contacts are provided by residues Arg145 and 154-155 (VY). Residues Arg178 and Arg189 each contribute to the AMP site. Ser218 provides a ligand contact to GTP.

The protein belongs to the adenylate kinase family. AK3 subfamily. Monomer.

The protein localises to the mitochondrion matrix. It catalyses the reaction a ribonucleoside 5'-triphosphate + AMP = a ribonucleoside 5'-diphosphate + ADP. Its function is as follows. Involved in maintaining the homeostasis of cellular nucleotides by catalyzing the interconversion of nucleoside phosphates. Has GTP:AMP phosphotransferase and ITP:AMP phosphotransferase activities. Does not accept ATP as phosphate donor. In Saccharomyces cerevisiae (Baker's yeast), this protein is GTP:AMP phosphotransferase, mitochondrial.